Consider the following 349-residue polypeptide: 5-deoxyribose 1-phosphate isomerase (349 aa).

Substrate is bound by residues 49–51 (RGA), Arg-92, and Gln-199. Asp-240 (proton donor) is an active-site residue. 250 to 251 (NK) serves as a coordination point for substrate.

It belongs to the EIF-2B alpha/beta/delta subunits family. DrdI subfamily.

The catalysed reaction is 5-deoxy-alpha-D-ribose 1-phosphate = 5-deoxy-D-ribulose 1-phosphate. Its pathway is carbohydrate degradation. Its function is as follows. Catalyzes the isomerization of 5-deoxy-alpha-D-ribose 1-phosphate to 5-deoxy-D-ribulose 1-phosphate, as part of a 5-deoxyribose salvage pathway that recycles this toxic radical SAM enzyme by-product to mainstream metabolites. The sequence is that of 5-deoxyribose 1-phosphate isomerase from Clostridium botulinum (strain ATCC 19397 / Type A).